Here is a 547-residue protein sequence, read N- to C-terminus: Probable bifunctional tRNA threonylcarbamoyladenosine biosynthesis protein (547 aa).

The segment at 1 to 329 (MKNTFILGIE…FRTDDVNVTW (329 aa)) is kae1. Fe cation-binding residues include histidine 113, histidine 117, and tyrosine 134. L-threonylcarbamoyladenylate is bound by residues 134–138 (YVSGA), aspartate 166, glycine 179, glutamate 183, and asparagine 262. Aspartate 290 lines the Fe cation pocket. The Protein kinase domain maps to 340–547 (EISPEAFLRA…EEIKKRARYA (208 aa)). Residues 355-363 (LDNGAEAVI) and lysine 377 contribute to the ATP site. The Proton acceptor; for kinase activity role is filled by aspartate 464.

In the N-terminal section; belongs to the KAE1 / TsaD family. The protein in the C-terminal section; belongs to the protein kinase superfamily. Tyr protein kinase family. BUD32 subfamily. In terms of assembly, component of the KEOPS complex that consists of Kae1, Bud32, Cgi121 and Pcc1; the whole complex dimerizes. It depends on Fe(2+) as a cofactor.

It is found in the cytoplasm. The enzyme catalyses L-seryl-[protein] + ATP = O-phospho-L-seryl-[protein] + ADP + H(+). It carries out the reaction L-threonyl-[protein] + ATP = O-phospho-L-threonyl-[protein] + ADP + H(+). It catalyses the reaction L-threonylcarbamoyladenylate + adenosine(37) in tRNA = N(6)-L-threonylcarbamoyladenosine(37) in tRNA + AMP + H(+). Its function is as follows. Required for the formation of a threonylcarbamoyl group on adenosine at position 37 (t(6)A37) in tRNAs that read codons beginning with adenine. Is a component of the KEOPS complex that is probably involved in the transfer of the threonylcarbamoyl moiety of threonylcarbamoyl-AMP (TC-AMP) to the N6 group of A37. The Kae1 domain likely plays a direct catalytic role in this reaction. The Bud32 domain probably displays kinase activity that regulates Kae1 function. The chain is Probable bifunctional tRNA threonylcarbamoyladenosine biosynthesis protein from Methanosarcina acetivorans (strain ATCC 35395 / DSM 2834 / JCM 12185 / C2A).